A 246-amino-acid polypeptide reads, in one-letter code: Probable H/ACA ribonucleoprotein complex subunit 1-like protein (246 aa).

Disordered stretches follow at residues 1-61 (MSFR…GGYD) and 155-246 (PQVG…TKFD). RGG-box stretches follow at residues 4–59 (RGGR…GRGG) and 161–223 (RGRG…RGRG). Positions 168 to 180 (RGGDRGRGGDRGR) are enriched in basic and acidic residues. Over residues 181 to 221 (GGFGGRGGGGGGFRGGSRGGFGGGDRGGFRGGRGGDFGGRG) the composition is skewed to gly residues.

This sequence belongs to the GAR1 family. Component of the small nucleolar ribonucleoprotein particle containing H/ACA-type snoRNAs (H/ACA snoRNPs).

It is found in the nucleus. The protein resides in the nucleolus. Required for ribosome biogenesis. Part of a complex which catalyzes pseudouridylation of rRNA. This involves the isomerization of uridine such that the ribose is subsequently attached to C5, instead of the normal N1. Pseudouridine ('psi') residues may serve to stabilize the conformation of rRNAs. This chain is Probable H/ACA ribonucleoprotein complex subunit 1-like protein, found in Caenorhabditis briggsae.